We begin with the raw amino-acid sequence, 255 residues long: Glutamate racemase (255 aa).

Substrate-binding positions include 7–8 (DS) and 39–40 (YG). The active-site Proton donor/acceptor is the Cys70. 71–72 (NT) lines the substrate pocket. Cys181 serves as the catalytic Proton donor/acceptor. 182–183 (TH) serves as a coordination point for substrate.

This sequence belongs to the aspartate/glutamate racemases family.

It catalyses the reaction L-glutamate = D-glutamate. Its pathway is cell wall biogenesis; peptidoglycan biosynthesis. In terms of biological role, provides the (R)-glutamate required for cell wall biosynthesis. The protein is Glutamate racemase of Helicobacter pylori (strain ATCC 700392 / 26695) (Campylobacter pylori).